Consider the following 768-residue polypeptide: Cullin-3 (768 aa).

Residues 677–698 (VAAKQGESDPERKETRQKVDDD) form a disordered region. Positions 682 to 698 (GESDPERKETRQKVDDD) are enriched in basic and acidic residues. The Cullin neddylation domain maps to 698–760 (DRKHEIEAAI…REYLARTPED (63 aa)). Lysine 712 participates in a covalent cross-link: Glycyl lysine isopeptide (Lys-Gly) (interchain with G-Cter in NEDD8).

Belongs to the cullin family. In terms of assembly, component of multiple BCR (BTB-CUL3-RBX1) E3 ubiquitin-protein ligase complexes formed of cul3, rbx1 and a variable BTB domain-containing protein acting as both, adapter to cullin and substrate recognition subunit. Interacts with btbd6. Post-translationally, neddylated. Attachment of NEDD8 is required for the E3 ubiquitin-protein ligase activity of the SCF-like complex.

It is found in the nucleus. It functions in the pathway protein modification; protein ubiquitination. Its function is as follows. Probable core component of cullin-based SCF-like E3 ubiquitin-protein ligase complexes which mediate the ubiquitination and subsequent proteasomal degradation of target proteins. The E3 ubiquitin-protein ligase activity of the complex is dependent on the neddylation of the cullin subunit. Involved in ER-Golgi transport by regulating the size of COPII coats, thereby playing a key role in collagen export, which is required for embryonic stem (ES) cells division. May play a role in the regulation of mittotic entry via ubiquitination of aurka. This Xenopus tropicalis (Western clawed frog) protein is Cullin-3 (cul3).